The following is a 705-amino-acid chain: Elongation factor G (705 aa).

The tr-type G domain occupies 8-294 (ELYRNFGIMA…SVIDYLPSPL (287 aa)). GTP-binding positions include 17 to 24 (AHIDAGKT), 92 to 96 (DTPGH), and 146 to 149 (NKMD).

The protein belongs to the TRAFAC class translation factor GTPase superfamily. Classic translation factor GTPase family. EF-G/EF-2 subfamily.

The protein resides in the cytoplasm. In terms of biological role, catalyzes the GTP-dependent ribosomal translocation step during translation elongation. During this step, the ribosome changes from the pre-translocational (PRE) to the post-translocational (POST) state as the newly formed A-site-bound peptidyl-tRNA and P-site-bound deacylated tRNA move to the P and E sites, respectively. Catalyzes the coordinated movement of the two tRNA molecules, the mRNA and conformational changes in the ribosome. This chain is Elongation factor G, found in Cereibacter sphaeroides (strain KD131 / KCTC 12085) (Rhodobacter sphaeroides).